We begin with the raw amino-acid sequence, 364 residues long: DNA polymerase IV (364 aa).

The UmuC domain maps to 8–189 (IIHIDMDCYF…LPLTKIPGVG (182 aa)). 2 residues coordinate Mg(2+): Asp12 and Asp107. The active site involves Glu108.

The protein belongs to the DNA polymerase type-Y family. Monomer. Requires Mg(2+) as cofactor.

Its subcellular location is the cytoplasm. The enzyme catalyses DNA(n) + a 2'-deoxyribonucleoside 5'-triphosphate = DNA(n+1) + diphosphate. Its function is as follows. Poorly processive, error-prone DNA polymerase involved in untargeted mutagenesis. Copies undamaged DNA at stalled replication forks, which arise in vivo from mismatched or misaligned primer ends. These misaligned primers can be extended by PolIV. Exhibits no 3'-5' exonuclease (proofreading) activity. May be involved in translesional synthesis, in conjunction with the beta clamp from PolIII. This Shewanella woodyi (strain ATCC 51908 / MS32) protein is DNA polymerase IV.